Here is an 859-residue protein sequence, read N- to C-terminus: Linoleate 9S-lipoxygenase 1 (859 aa).

Positions 21–161 (VKGTVVLMKK…HYTTDRVFFS (141 aa)) constitute a PLAT domain. Residues 164 to 859 (TYLPHETPAT…GRGIPNSVSI (696 aa)) enclose the Lipoxygenase domain. Residues 213–246 (KNPRPVLGGTQEYPYPRRGRTGRKPTKEDPQTES) form a disordered region. The Fe cation site is built by H519, H524, H711, N715, and I859.

This sequence belongs to the lipoxygenase family. Monomer. Fe cation is required as a cofactor. Seedlings, roots, leaves, and flowers (at protein level). Expressed in guard cells.

The protein resides in the cytoplasm. The catalysed reaction is (9Z,12Z)-octadecadienoate + O2 = (9S)-hydroperoxy-(10E,12Z)-octadecadienoate. The enzyme catalyses (9Z,12Z,15Z)-octadecatrienoate + O2 = (9S)-hydroperoxy-(10E,12Z,15Z)-octadecatrienoate. The protein operates within lipid metabolism; oxylipin biosynthesis. Functionally, 9S-lipoxygenase that can use linoleic acid or linolenic acid as substrates. Plant lipoxygenases may be involved in a number of diverse aspects of plant physiology including growth and development, pest resistance, and senescence or responses to wounding. Catalyzes the hydroperoxidation of lipids containing a cis,cis-1,4-pentadiene structure. Function as regulators of root development by controlling the emergence of lateral roots. 9S-lypoxygenase-derived oxylipins may play an antagonistic role to ethylene signaling in the control of responses involving oxidative stress, lipid peroxidation and plant defense. LOX1-derived oxylipins may be involved in stress signaling from roots to shoots in response to cadmium exposure. 9S-lypoxygenase-derived oxylipins are engaged during infection to control the balance between salicylic acid (SA) and jasmonate (JA) signaling to facilitate infection by the fungal pathogen Fusarium graminearum. 9S-lypoxygenase-derived oxylipins activate brassinosteroid signaling to promote cell wall-based defense and limit pathogen infection. The LOX1-derived compound (9S)-hydroperoxy-(10E,12Z,15Z)-octadecatrienoate protects plant tissues against infection by the bacterial pathogen Pseudomonas syringae pv tomato DC3000. The LOX1-derived oxylipins are required to trigger stomatal closure in response to both infection by the bacterial pathogen Pseudomonas syringae pv tomato DC3000, and the pathogen-associated molecular pattern (PAMP) flagellin peptide flg22. Contributes to the oxidation of free fatty acids during seed aging. The chain is Linoleate 9S-lipoxygenase 1 from Arabidopsis thaliana (Mouse-ear cress).